Reading from the N-terminus, the 191-residue chain is UPF0312 protein Shew185_3055 (191 aa).

The first 22 residues, 1–22, serve as a signal peptide directing secretion; the sequence is MKKQLLSALIGASLLAPMAASA.

It belongs to the UPF0312 family. Type 1 subfamily.

It is found in the periplasm. This is UPF0312 protein Shew185_3055 from Shewanella baltica (strain OS185).